A 2359-amino-acid chain; its full sequence is Pre-mRNA-processing-splicing factor 8B (2359 aa).

The interval 1 to 50 (MWNIDGTSLAPPGTDGSRMQTPSHPADHPSYTAPSNRNTPTVPTPEDAEA) is disordered. Polar residues predominate over residues 32-41 (TAPSNRNTPT). The 132-residue stretch at 2129–2260 (TYIMPKNILK…LTSYKLTQAG (132 aa)) folds into the MPN domain.

Its subcellular location is the nucleus. In terms of biological role, functions as a scaffold that mediates the ordered assembly of spliceosomal proteins and snRNAs. Required for the assembly of the U4/U6-U5 tri-snRNP complex. The sequence is that of Pre-mRNA-processing-splicing factor 8B from Arabidopsis thaliana (Mouse-ear cress).